The primary structure comprises 74 residues: Guanine nucleotide-binding protein G(T) subunit gamma-T1 (74 aa).

C71 is subject to Cysteine methyl ester. A lipid anchor (S-farnesyl cysteine) is attached at C71. Residues 72–74 (VIS) constitute a propeptide, removed in mature form.

This sequence belongs to the G protein gamma family. As to quaternary structure, g proteins are composed of 3 units, alpha, beta and gamma. As to expression, retinal rod outer segment.

It localises to the cell membrane. Guanine nucleotide-binding proteins (G proteins) are involved as a modulator or transducer in various transmembrane signaling systems. The beta and gamma chains are required for the GTPase activity, for replacement of GDP by GTP, and for G protein-effector interaction. This chain is Guanine nucleotide-binding protein G(T) subunit gamma-T1 (GNGT1), found in Bos taurus (Bovine).